A 544-amino-acid chain; its full sequence is CTP synthase (544 aa).

The tract at residues 1–265 is amidoligase domain; that stretch reads MTRYIFITGG…DTQVLAYFGL (265 aa). CTP is bound at residue S13. S13 is a UTP binding site. Residue 14-19 participates in ATP binding; that stretch reads SLGKGL. Y54 contributes to the L-glutamine binding site. ATP is bound at residue D71. Residues D71 and E139 each coordinate Mg(2+). CTP is bound by residues 146 to 148, 186 to 191, and K222; these read DIE and KTKPTQ. UTP is bound by residues 186-191 and K222; that span reads KTKPTQ. An ATP-binding site is contributed by V240. Residues 291 to 543 form the Glutamine amidotransferase type-1 domain; sequence TIAVVGKYTS…IKAAIEQSRL (253 aa). Residue G353 coordinates L-glutamine. The Nucleophile; for glutamine hydrolysis role is filled by C380. Residues 381–384, E404, and R472 contribute to the L-glutamine site; that span reads FGMQ. Active-site residues include H516 and E518.

The protein belongs to the CTP synthase family. As to quaternary structure, homotetramer.

The enzyme catalyses UTP + L-glutamine + ATP + H2O = CTP + L-glutamate + ADP + phosphate + 2 H(+). It carries out the reaction L-glutamine + H2O = L-glutamate + NH4(+). It catalyses the reaction UTP + NH4(+) + ATP = CTP + ADP + phosphate + 2 H(+). It participates in pyrimidine metabolism; CTP biosynthesis via de novo pathway; CTP from UDP: step 2/2. Allosterically activated by GTP, when glutamine is the substrate; GTP has no effect on the reaction when ammonia is the substrate. The allosteric effector GTP functions by stabilizing the protein conformation that binds the tetrahedral intermediate(s) formed during glutamine hydrolysis. Inhibited by the product CTP, via allosteric rather than competitive inhibition. In terms of biological role, catalyzes the ATP-dependent amination of UTP to CTP with either L-glutamine or ammonia as the source of nitrogen. Regulates intracellular CTP levels through interactions with the four ribonucleotide triphosphates. The chain is CTP synthase from Azospirillum brasilense.